A 266-amino-acid polypeptide reads, in one-letter code: MTWLEIVVLALIQGLTEFLPISSSAHLILPSEVWGWQDQGLAFDVAVHVGTLLAVMVYFRADIFNLLNGWIKQITGGGASQESRLAWAVILGTIPACVAGLLLDSWIEENLRSALVIALTTIGFGVLLGMADRKEGTRDIDQFTLKDALIIGVSQALALIPGTSRSGITMTSALFLGLNRDTAARFSFLLSIPLIAAAGLFKGLELADTGTSSQWSEIAGATLISAVSAYACIHLFLKFLQKIGFMPFVIYRMLLGAGLLVWLYVA.

Transmembrane regions (helical) follow at residues Met-1 to Ile-21, Gln-39 to Phe-59, Trp-87 to Ile-107, Leu-111 to Ala-131, Phe-143 to Thr-163, Phe-186 to Leu-206, Glu-217 to Leu-237, and Ile-243 to Leu-263.

It belongs to the UppP family.

It localises to the cell inner membrane. It catalyses the reaction di-trans,octa-cis-undecaprenyl diphosphate + H2O = di-trans,octa-cis-undecaprenyl phosphate + phosphate + H(+). Functionally, catalyzes the dephosphorylation of undecaprenyl diphosphate (UPP). Confers resistance to bacitracin. The chain is Undecaprenyl-diphosphatase from Hahella chejuensis (strain KCTC 2396).